Consider the following 110-residue polypeptide: Putative anti-sigma factor antagonist TM_1442 (110 aa).

One can recognise an STAS domain in the interval 4-110; that stretch reads LKLDIVEQDD…FKITDTVEEA (107 aa). Ser-59 carries the post-translational modification Phosphoserine.

It belongs to the anti-sigma-factor antagonist family. Post-translationally, phosphorylated on a serine residue.

In terms of biological role, in the phosphorylated form it could act as an anti-anti-sigma factor that counteracts an anti-sigma factor and thus releases a sigma factor from inhibition. In Thermotoga maritima (strain ATCC 43589 / DSM 3109 / JCM 10099 / NBRC 100826 / MSB8), this protein is Putative anti-sigma factor antagonist TM_1442.